The sequence spans 212 residues: Elongation factor Ts (212 aa).

An involved in Mg(2+) ion dislocation from EF-Tu region spans residues 82–85 (SDFV).

It belongs to the EF-Ts family.

The protein localises to the cytoplasm. Functionally, associates with the EF-Tu.GDP complex and induces the exchange of GDP to GTP. It remains bound to the aminoacyl-tRNA.EF-Tu.GTP complex up to the GTP hydrolysis stage on the ribosome. The chain is Elongation factor Ts from Solibacter usitatus (strain Ellin6076).